The chain runs to 655 residues: MANPASYRPKTGEIPTDPGVYRFRDEHGRVIYVGKAKNLRSRLTSYFANPVTLLPKTFAMVHTATSVQWTIVGSELEALQLEYTWIKEFAPRYNLAFRDDKSYPYLAVTMGEEFPRVQVMRGERRKGTRYFGPFTAGAIRETVDTLLRVFPVRTCSPSTFKRAQQSGRPCLLGYIDKCAVPCVGRVSAEEHRTLADEFCAFMGGEAKRFIGTLEKQMAEAVAELDYERAARLRDDVIALRKVFERNAVVLAEDTSADIFAVHQDELEAAVQVFNVRSGRIRGQRGWVVEKVEDLVPAELIEHLLQQVYGDERADEDRIPRQILVPELPANVEQLTEWLSGLRGAKVEIKVPQRGDKAALMETVALNAEQAMKLHKSKRAGDLTQRSLALRELQDALDLPLPLLRIECYDISHVQGTNVVASMVVVEDGIAKKSEYRRFSITGDAARDDTASMYDVITRRFRNYLQEQQDRAEALTRPVEFEISDAAETAPKSKFAYPPNLVVVDGGPPQVAATSRALADLGITDVAVIGLAKRLEEVWLPEDDFPVILPRTSQGLYLLQRIRDEAHRFAISFHRQKRGKSMTASLLDGVPGLGESKQKALLKHFGSVKKLQSADVSQISEVKGIGPVLAEAVRSALESVDAQPAINMATGEILES.

One can recognise a GIY-YIG domain in the interval 16 to 95; sequence TDPGVYRFRD…IKEFAPRYNL (80 aa). The UVR domain occupies 207–242; sequence KRFIGTLEKQMAEAVAELDYERAARLRDDVIALRKV.

The protein belongs to the UvrC family. As to quaternary structure, interacts with UvrB in an incision complex.

It localises to the cytoplasm. In terms of biological role, the UvrABC repair system catalyzes the recognition and processing of DNA lesions. UvrC both incises the 5' and 3' sides of the lesion. The N-terminal half is responsible for the 3' incision and the C-terminal half is responsible for the 5' incision. This chain is UvrABC system protein C, found in Renibacterium salmoninarum (strain ATCC 33209 / DSM 20767 / JCM 11484 / NBRC 15589 / NCIMB 2235).